We begin with the raw amino-acid sequence, 95 residues long: ESAT-6-like protein EsxC (95 aa).

It belongs to the WXG100 family. ESAT-6 subfamily.

It is found in the secreted. The polypeptide is ESAT-6-like protein EsxC (Mycolicibacterium paratuberculosis (strain ATCC BAA-968 / K-10) (Mycobacterium paratuberculosis)).